The chain runs to 388 residues: Succinate--CoA ligase [ADP-forming] subunit beta (388 aa).

In terms of domain architecture, ATP-grasp spans 9–244 (KEIFRSMGVA…LEEEDPKEIE (236 aa)). ATP is bound by residues lysine 46, 53 to 55 (GRG), glutamate 99, cysteine 102, and glutamate 107. Asparagine 199 and aspartate 213 together coordinate Mg(2+). Substrate contacts are provided by residues asparagine 264 and 321-323 (GIM).

This sequence belongs to the succinate/malate CoA ligase beta subunit family. As to quaternary structure, heterotetramer of two alpha and two beta subunits. Mg(2+) is required as a cofactor.

The catalysed reaction is succinate + ATP + CoA = succinyl-CoA + ADP + phosphate. The enzyme catalyses GTP + succinate + CoA = succinyl-CoA + GDP + phosphate. Its pathway is carbohydrate metabolism; tricarboxylic acid cycle; succinate from succinyl-CoA (ligase route): step 1/1. Functionally, succinyl-CoA synthetase functions in the citric acid cycle (TCA), coupling the hydrolysis of succinyl-CoA to the synthesis of either ATP or GTP and thus represents the only step of substrate-level phosphorylation in the TCA. The beta subunit provides nucleotide specificity of the enzyme and binds the substrate succinate, while the binding sites for coenzyme A and phosphate are found in the alpha subunit. This Staphylococcus aureus (strain MRSA252) protein is Succinate--CoA ligase [ADP-forming] subunit beta.